The sequence spans 195 residues: Shikimate kinase (195 aa).

An ATP-binding site is contributed by 26–31 (GSGKST). S30 provides a ligand contact to Mg(2+). 3 residues coordinate substrate: D48, R72, and G94. Residue R132 coordinates ATP. R151 contacts substrate.

Belongs to the shikimate kinase family. As to quaternary structure, monomer. It depends on Mg(2+) as a cofactor.

Its subcellular location is the cytoplasm. The catalysed reaction is shikimate + ATP = 3-phosphoshikimate + ADP + H(+). Its pathway is metabolic intermediate biosynthesis; chorismate biosynthesis; chorismate from D-erythrose 4-phosphate and phosphoenolpyruvate: step 5/7. In terms of biological role, catalyzes the specific phosphorylation of the 3-hydroxyl group of shikimic acid using ATP as a cosubstrate. This is Shikimate kinase from Synechococcus sp. (strain RCC307).